The following is a 289-amino-acid chain: LBH domain-containing protein 1 (289 aa).

Disordered regions lie at residues 1-36 (MALV…PLWD) and 205-289 (EGAE…ASQD). Positions 1–128 (MALVPGRSKE…AEAFFQDQSE (128 aa)) constitute an LBH domain. The segment covering 15–25 (TRNSPGSSQHP) has biased composition (polar residues).

Expressed in bladder cancer tissues (at protein level).

This is LBH domain-containing protein 1 from Homo sapiens (Human).